Reading from the N-terminus, the 224-residue chain is uncharacterized protein (224 aa).

Residues 9 to 68 (SKMVDVNEITKYLPGFNCGACGYKRCDLFAEALLNKDVKLEDCPFLLRERFKENYEKLKE) form the 4Fe-4S domain. Residues Cys26, Cys29, Cys34, and Cys51 each contribute to the [4Fe-4S] cluster site.

[4Fe-4S] cluster serves as cofactor.

This is an uncharacterized protein from Methanocaldococcus jannaschii (strain ATCC 43067 / DSM 2661 / JAL-1 / JCM 10045 / NBRC 100440) (Methanococcus jannaschii).